The following is a 221-amino-acid chain: Octanoyltransferase (221 aa).

The region spanning 29–208 (DEIPDTCLLL…RLTEFLLPAR (180 aa)) is the BPL/LPL catalytic domain. Residues 67–74 (RGGRITWH), 138–140 (AIG), and 151–153 (GFA) each bind substrate. Cysteine 169 (acyl-thioester intermediate) is an active-site residue.

This sequence belongs to the LipB family.

It is found in the cytoplasm. The catalysed reaction is octanoyl-[ACP] + L-lysyl-[protein] = N(6)-octanoyl-L-lysyl-[protein] + holo-[ACP] + H(+). The protein operates within protein modification; protein lipoylation via endogenous pathway; protein N(6)-(lipoyl)lysine from octanoyl-[acyl-carrier-protein]: step 1/2. Its function is as follows. Catalyzes the transfer of endogenously produced octanoic acid from octanoyl-acyl-carrier-protein onto the lipoyl domains of lipoate-dependent enzymes. Lipoyl-ACP can also act as a substrate although octanoyl-ACP is likely to be the physiological substrate. The sequence is that of Octanoyltransferase from Acidothermus cellulolyticus (strain ATCC 43068 / DSM 8971 / 11B).